The following is a 452-amino-acid chain: Phosphoglucosamine mutase (452 aa).

The Phosphoserine intermediate role is filled by serine 101. Residues serine 101, aspartate 241, aspartate 243, and aspartate 245 each contribute to the Mg(2+) site. Serine 101 carries the post-translational modification Phosphoserine.

Belongs to the phosphohexose mutase family. Mg(2+) is required as a cofactor. Post-translationally, activated by phosphorylation.

The enzyme catalyses alpha-D-glucosamine 1-phosphate = D-glucosamine 6-phosphate. Functionally, catalyzes the conversion of glucosamine-6-phosphate to glucosamine-1-phosphate. This Lactococcus lactis subsp. lactis (strain IL1403) (Streptococcus lactis) protein is Phosphoglucosamine mutase.